The chain runs to 512 residues: ATP synthase subunit alpha (512 aa).

Position 169–176 (169–176) interacts with ATP; it reads GDRQTGKT.

It belongs to the ATPase alpha/beta chains family. In terms of assembly, F-type ATPases have 2 components, CF(1) - the catalytic core - and CF(0) - the membrane proton channel. CF(1) has five subunits: alpha(3), beta(3), gamma(1), delta(1), epsilon(1). CF(0) has four main subunits: a(1), b(1), b'(1) and c(9-12).

Its subcellular location is the cell inner membrane. It catalyses the reaction ATP + H2O + 4 H(+)(in) = ADP + phosphate + 5 H(+)(out). Its function is as follows. Produces ATP from ADP in the presence of a proton gradient across the membrane. The alpha chain is a regulatory subunit. The protein is ATP synthase subunit alpha of Cereibacter sphaeroides (strain ATCC 17025 / ATH 2.4.3) (Rhodobacter sphaeroides).